A 32-amino-acid polypeptide reads, in one-letter code: Calichemicin antitumor antibiotic biosynthesis protein (32 aa).

The polypeptide is Calichemicin antitumor antibiotic biosynthesis protein (Micromonospora echinospora (Micromonospora purpurea)).